The sequence spans 283 residues: 1-acyl-sn-glycerol-3-phosphate acyltransferase alpha (283 aa).

The first 26 residues, 1 to 26 (MDLWPGAWMLLLLLFLLLLFLLPTLW), serve as a signal peptide directing secretion. The Lumenal segment spans residues 27–37 (FCSPSAKYFFK). The chain crosses the membrane as a helical span at residues 38 to 58 (MAFYNGWILFLAVLAIPVCAV). Residues 59-127 (RGRNVENMKI…PGRCVPIAKR (69 aa)) lie on the Cytoplasmic side of the membrane. An HXXXXD motif motif is present at residues 104–109 (HQSSLD). Residues 128 to 148 (ELLWAGSAGLACWLAGVIFID) form a helical membrane-spanning segment. Residues 149–283 (RKRTGDAISV…DYLKKPGGGG (135 aa)) lie on the Lumenal side of the membrane. An EGTR motif motif is present at residues 178–181 (EGTR).

This sequence belongs to the 1-acyl-sn-glycerol-3-phosphate acyltransferase family. In terms of tissue distribution, widely expressed. Expressed in adipose tissue and at high levels in testis and pancreas. Expressed at lower levels in tissues such as heart, brain, placenta, kidney, lung, spleen, thymus, prostate, ovary, intestine, colon, leukocyte and liver.

Its subcellular location is the endoplasmic reticulum membrane. It catalyses the reaction a 1-acyl-sn-glycero-3-phosphate + an acyl-CoA = a 1,2-diacyl-sn-glycero-3-phosphate + CoA. The enzyme catalyses 1-(9Z-octadecenoyl)-sn-glycero-3-phosphate + (9Z)-octadecenoyl-CoA = 1,2-di-(9Z-octadecenoyl)-sn-glycero-3-phosphate + CoA. It carries out the reaction 1-(9Z-octadecenoyl)-sn-glycero-3-phosphate + hexadecanoyl-CoA = 1-(9Z)-octadecenoyl-2-hexadecanoyl-sn-glycero-3-phosphate + CoA. The catalysed reaction is heptadecanoyl-CoA + 1-(9Z-octadecenoyl)-sn-glycero-3-phosphate = 1-(9Z)-octadecenoyl-2-heptadecanoyl-sn-glycero-3-phosphate + CoA. It catalyses the reaction 1-(9Z-octadecenoyl)-sn-glycero-3-phosphate + octadecanoyl-CoA = 1-(9Z-octadecenoyl)-2-octadecanoyl-sn-glycero-3-phosphate + CoA. The enzyme catalyses 1-(9Z-octadecenoyl)-sn-glycero-3-phosphate + (9Z,12Z)-octadecadienoyl-CoA = 1-(9Z)-octadecenoyl-2-(9Z,12Z)-octadecadienoyl-sn-glycero-3-phosphate + CoA. It carries out the reaction 1-(9Z-octadecenoyl)-sn-glycero-3-phosphate + tetradecanoyl-CoA = 1-(9Z)-octadecenoyl-2-tetradecanoyl-sn-glycero-3-phosphate + CoA. The catalysed reaction is pentadecanoyl-CoA + 1-(9Z-octadecenoyl)-sn-glycero-3-phosphate = 1-(9Z)-octadecenoyl-2-pentadecanoyl-sn-glycero-3-phosphate + CoA. It catalyses the reaction 1-hexadecanoyl-sn-glycero-3-phosphate + (9Z)-octadecenoyl-CoA = 1-hexadecanoyl-2-(9Z-octadecenoyl)-sn-glycero-3-phosphate + CoA. The enzyme catalyses 1-(9Z,12Z,15Z)-octadecatrienoyl-sn-glycero-3-phosphate + (9Z)-octadecenoyl-CoA = 1-(9Z,12Z,15Z)-octadecatrienoyl-2-(9Z)-octadecenoyl-sn-glycero-3-phosphate + CoA. It carries out the reaction 1-(6Z,9Z,12Z-octadecatrienoyl)-sn-glycero-3-phosphate + (9Z)-octadecenoyl-CoA = (6Z,9Z,12Z)-octadecatrienoyl-2-(9Z)-octadecenoyl-sn-glycero-3-phosphate + CoA. The catalysed reaction is 1-eicosanoyl-sn-glycero-3-phosphate + (9Z)-octadecenoyl-CoA = 1-eicosanoyl-2-(9Z)-octadecenoyl-sn-glycero-3-phosphate + CoA. It catalyses the reaction 1-tetradecanoyl-sn-glycerol 3-phosphate + (9Z)-octadecenoyl-CoA = 1-tetradecanoyl-2-(9Z)-octadecenoyl-sn-glycero-3-phosphate + CoA. The enzyme catalyses 1-(9Z-octadecenoyl)-sn-glycero-3-phosphate + (5Z,8Z,11Z,14Z)-eicosatetraenoyl-CoA = 1-(9Z)-octadecenoyl-2-(5Z,8Z,11Z,14Z)-eicosatetraenoyl-sn-glycero-3-phosphate + CoA. It carries out the reaction 1-(9Z-octadecenoyl)-sn-glycero-3-phosphate + dodecanoyl-CoA = 1-(9Z)-octadecenoyl-2-dodecanoyl-sn-glycero-3-phosphate + CoA. The catalysed reaction is (6Z)-octadecenoyl-CoA + 1-(9Z-octadecenoyl)-sn-glycero-3-phosphate = 1-(9Z)-octadecenoyl-2-(6Z)-octadecenoyl-sn-glycero-3-phosphate + CoA. It catalyses the reaction (11Z)-octadecenoyl-CoA + 1-(9Z-octadecenoyl)-sn-glycero-3-phosphate = 1-(9Z)-octadecenoyl-2-(11Z)-octadecenoyl-sn-glycero-3-phosphate + CoA. The enzyme catalyses (9Z)-hexadecenoyl-CoA + 1-(9Z-octadecenoyl)-sn-glycero-3-phosphate = 1-(9Z-octadecenoyl)-2-(9Z-hexadecenoyl)-sn-glycero-3-phosphate + CoA. The protein operates within phospholipid metabolism; CDP-diacylglycerol biosynthesis; CDP-diacylglycerol from sn-glycerol 3-phosphate: step 2/3. Functionally, converts 1-acyl-sn-glycerol-3-phosphate (lysophosphatidic acid or LPA) into 1,2-diacyl-sn-glycerol-3-phosphate (phosphatidic acid or PA) by incorporating an acyl moiety at the sn-2 position of the glycerol backbone. The polypeptide is 1-acyl-sn-glycerol-3-phosphate acyltransferase alpha (AGPAT1) (Homo sapiens (Human)).